A 209-amino-acid polypeptide reads, in one-letter code: MEQESLNQERLVEEIAKRVKEILQLIGEDTEREGLKETPERVAKALLEMTSALRSPQPYIKVFSLAENENSSVEDQIVLVKDISFSSLCEHHLLPIIGKVHVAYVVGKSGKVAGLSKIIRLVNYYASRPQIQERLVEQIAEAIMKSDIQPKGVMVIGDALHMCTYVRGVKDREASLISLSTRGIFSTKPSLKSQVFRLINTSKKSSTFL.

Zn(2+) is bound by residues Cys89, His92, and Cys163.

The protein belongs to the GTP cyclohydrolase I family. As to quaternary structure, toroid-shaped homodecamer, composed of two pentamers of five dimers.

The enzyme catalyses GTP + H2O = 7,8-dihydroneopterin 3'-triphosphate + formate + H(+). It participates in cofactor biosynthesis; 7,8-dihydroneopterin triphosphate biosynthesis; 7,8-dihydroneopterin triphosphate from GTP: step 1/1. This chain is GTP cyclohydrolase 1, found in Sulfolobus acidocaldarius (strain ATCC 33909 / DSM 639 / JCM 8929 / NBRC 15157 / NCIMB 11770).